A 249-amino-acid chain; its full sequence is Benzil reductase ((S)-benzoin forming) (249 aa).

NADP(+)-binding residues include Ile6, Asn87, Tyr154, Lys158, Val189, and Thr191. Residue Tyr154 is the Proton acceptor of the active site.

It belongs to the short-chain dehydrogenases/reductases (SDR) family.

Its subcellular location is the cytoplasm. The enzyme catalyses (S)-benzoin + NADP(+) = benzil + NADPH + H(+). The catalysed reaction is 2-hydroxy-1-phenyl-1-propanone + NADP(+) = 1-phenyl-1,2-propanedione + NADPH + H(+). With respect to regulation, inhibited by Cibacron blue 3GA, a general SDR family inhibitor. In terms of biological role, reduces benzil stereospecifically to (S)-benzoin. Can also reduce 1-phenyl-1,2-propanedione, 1,4-naphthoquinone, 1-(4-methyl-phenyl)-2-phenyl-ethane-1,2-dione, 1-(4-fluoro-phenyl)-2-phenyl-ethane-1,2-dione, methyl benzoylformate and p-nitrobenzaldehyde in decreasing order. The chain is Benzil reductase ((S)-benzoin forming) from Bacillus cereus.